The chain runs to 155 residues: MAKNTNITTVADNRKARFSYEVIDTLEAGLVLSGTEVKSLREGHANIQESYAAVEGGEIWLINSHIPEYFAGNRFNHEPRRRRKLLLSKKEMARLAQAVEREGMTMVPLKLYFNERGIAKLLLAIARGKKLHDKRETLKQRDWSREQARLLKERG.

The protein belongs to the SmpB family.

Its subcellular location is the cytoplasm. In terms of biological role, required for rescue of stalled ribosomes mediated by trans-translation. Binds to transfer-messenger RNA (tmRNA), required for stable association of tmRNA with ribosomes. tmRNA and SmpB together mimic tRNA shape, replacing the anticodon stem-loop with SmpB. tmRNA is encoded by the ssrA gene; the 2 termini fold to resemble tRNA(Ala) and it encodes a 'tag peptide', a short internal open reading frame. During trans-translation Ala-aminoacylated tmRNA acts like a tRNA, entering the A-site of stalled ribosomes, displacing the stalled mRNA. The ribosome then switches to translate the ORF on the tmRNA; the nascent peptide is terminated with the 'tag peptide' encoded by the tmRNA and targeted for degradation. The ribosome is freed to recommence translation, which seems to be the essential function of trans-translation. The polypeptide is SsrA-binding protein (Chelativorans sp. (strain BNC1)).